The sequence spans 592 residues: Inactive metallocarboxypeptidase ECM14 (592 aa).

The N-terminal stretch at 1-21 (MRQFTHGTLLAILALANTISA) is a signal peptide. Positions 22 to 174 (IPSFSANNYP…QTVYESYPSS (153 aa)) are excised as a propeptide. Polar residues predominate over residues 170–179 (SYPSSSQRPT). A disordered region spans residues 170 to 191 (SYPSSSQRPTDNGRGFLPSRES). The region spanning 202 to 521 (DYQPLSVIGP…NAVMVLAKFL (320 aa)) is the Peptidase M14 domain. Residues histidine 264 and glutamate 267 each coordinate Zn(2+). Residues 264-267 (HARE), arginine 322, and 339-340 (DR) contribute to the substrate site. An intrachain disulfide couples cysteine 333 to cysteine 356. The N-linked (GlcNAc...) asparagine glycan is linked to asparagine 349. Histidine 396 contributes to the Zn(2+) binding site. 397–398 (SY) serves as a coordination point for substrate. The interval 542-592 (ADKPILDDGDDDEEEDGQDKKDDSWIPDEYKNDNDHDDDDDGWGLRRRRKR) is disordered. Over residues 548–558 (DDGDDDEEEDG) the composition is skewed to acidic residues. Positions 559–575 (QDKKDDSWIPDEYKNDN) are enriched in basic and acidic residues.

The protein belongs to the peptidase M14 family. It depends on Zn(2+) as a cofactor.

The protein resides in the vacuole. The protein localises to the secreted. In terms of biological role, inactive carboxypeptidase that may play a role in cell wall organization and biogenesis. This Ajellomyces dermatitidis (strain ER-3 / ATCC MYA-2586) (Blastomyces dermatitidis) protein is Inactive metallocarboxypeptidase ECM14 (ECM14).